Consider the following 486-residue polypeptide: MESPQAKKSGLNLPAGMSTITSLRLETLSTPPSSASPRAISNLSSTPSPSKSSKCSDRFIPCRSSSRLHTFGLIDNQSPVKEGSNEAYNRLLKSELFGPDFASPSSSPAGCGVGSPLVSPSKNMLRFKTESCGPSSPFSPSIFGRNDGFCNEGFTPPKPPRKVPKTPHKVLDAPSLQDDFYLNLVDWSSQNTLAVGLGTCVYLWSASNSKVTKLCDLGPYDGVCSVQWTKEGSFISIGTNGGQVQIWDGTKCKKVRTMGGHQTRTGVLAWNSRILASGSRDRNILQHDMRVPSDFIGKLVGHKSEVCGLKWSCDDRELASGGNDNQLLVWNQHSQQPTLRLTEHTAAVKAIAWSPHQSNLLVSGGGTADRCIRFWNTTNGHQLNSVDTGSQVCNLAWSKNVNELVSTHGYSQNQIMVWKYPSLAKVATLTGHSMRVLYLAMSPDGQTIVTGAGDETLRFWNVFPSMKTPAPVKDTGLWSLGRTQIR.

The short motif at 24 to 36 (RLETLSTPPSSAS) is the PEST motif element. Residues 27 to 36 (TLSTPPSSAS) show a composition bias toward polar residues. The tract at residues 27 to 57 (TLSTPPSSASPRAISNLSSTPSPSKSSKCSD) is disordered. Positions 41 to 53 (SNLSSTPSPSKSS) are enriched in low complexity. Positions 57–63 (DRFIPCR) match the C-box motif. The short motif at 87 to 98 (AYNRLLKSELFG) is the CSM motif element. WD repeat units lie at residues 177–214 (QDDF…VTKL), 218–257 (GPYD…KVRT), 260–297 (GHQT…DFIG), 301–340 (GHKS…PTLR), 343–385 (EHTA…QLNS), 387–428 (DTGS…KVAT), and 431–470 (GHSM…KTPA).

The protein belongs to the WD repeat CDC20/Fizzy family. As to expression, mostly expressed in shoot apices and, to a lower extent, in roots, especially in root tips, and in hypocotyls. Expressed in nodulation-competent root zone but not in the nodules.

It functions in the pathway protein modification; protein ubiquitination. In terms of biological role, component of the anaphase promoting complex/cyclosome (APC/C), a cell cycle-regulated E3 ubiquitin-protein ligase complex that controls progression through mitosis and the G1 phase of the cell cycle. The protein is B-type cell cycle switch protein ccs52B of Medicago truncatula (Barrel medic).